Here is a 323-residue protein sequence, read N- to C-terminus: Lipoyl synthase (323 aa).

7 residues coordinate [4Fe-4S] cluster: cysteine 65, cysteine 70, cysteine 76, cysteine 91, cysteine 95, cysteine 98, and serine 304. A Radical SAM core domain is found at 77–293; that stretch reads FNNGTATFMI…KKEALSIGFT (217 aa).

It belongs to the radical SAM superfamily. Lipoyl synthase family. It depends on [4Fe-4S] cluster as a cofactor.

The protein localises to the cytoplasm. The catalysed reaction is [[Fe-S] cluster scaffold protein carrying a second [4Fe-4S](2+) cluster] + N(6)-octanoyl-L-lysyl-[protein] + 2 oxidized [2Fe-2S]-[ferredoxin] + 2 S-adenosyl-L-methionine + 4 H(+) = [[Fe-S] cluster scaffold protein] + N(6)-[(R)-dihydrolipoyl]-L-lysyl-[protein] + 4 Fe(3+) + 2 hydrogen sulfide + 2 5'-deoxyadenosine + 2 L-methionine + 2 reduced [2Fe-2S]-[ferredoxin]. It functions in the pathway protein modification; protein lipoylation via endogenous pathway; protein N(6)-(lipoyl)lysine from octanoyl-[acyl-carrier-protein]: step 2/2. Functionally, catalyzes the radical-mediated insertion of two sulfur atoms into the C-6 and C-8 positions of the octanoyl moiety bound to the lipoyl domains of lipoate-dependent enzymes, thereby converting the octanoylated domains into lipoylated derivatives. The protein is Lipoyl synthase of Buchnera aphidicola subsp. Acyrthosiphon pisum (strain APS) (Acyrthosiphon pisum symbiotic bacterium).